A 304-amino-acid polypeptide reads, in one-letter code: Protein UL24 homolog (304 aa).

The protein belongs to the HHV-1 UL24 protein family.

The protein resides in the host cytoplasm. Its subcellular location is the host nucleus. The protein localises to the host Golgi apparatus. Functionally, may play a role in the dispersal of host nucleolin from the nucleolus throughout the nucleus leading to a decrease in ribosome biogenesis. This Gallid herpesvirus 2 (strain Chicken/Md5/ATCC VR-987) (GaHV-2) protein is Protein UL24 homolog (MDV035).